The following is a 97-amino-acid chain: Large ribosomal subunit protein bL28 (97 aa).

Belongs to the bacterial ribosomal protein bL28 family.

This is Large ribosomal subunit protein bL28 from Rickettsia felis (strain ATCC VR-1525 / URRWXCal2) (Rickettsia azadi).